We begin with the raw amino-acid sequence, 355 residues long: Anthranilate phosphoribosyltransferase (355 aa).

5-phospho-alpha-D-ribose 1-diphosphate is bound by residues glycine 85, 88-89 (GD), threonine 93, 95-98 (NIST), 113-121 (KHGNRAASS), and serine 125. Glycine 85 is a binding site for anthranilate. Serine 97 contributes to the Mg(2+) binding site. Asparagine 116 contributes to the anthranilate binding site. Arginine 171 lines the anthranilate pocket. The Mg(2+) site is built by aspartate 229 and glutamate 230.

It belongs to the anthranilate phosphoribosyltransferase family. As to quaternary structure, homodimer. It depends on Mg(2+) as a cofactor.

It catalyses the reaction N-(5-phospho-beta-D-ribosyl)anthranilate + diphosphate = 5-phospho-alpha-D-ribose 1-diphosphate + anthranilate. The protein operates within amino-acid biosynthesis; L-tryptophan biosynthesis; L-tryptophan from chorismate: step 2/5. Catalyzes the transfer of the phosphoribosyl group of 5-phosphorylribose-1-pyrophosphate (PRPP) to anthranilate to yield N-(5'-phosphoribosyl)-anthranilate (PRA). In Acidothermus cellulolyticus (strain ATCC 43068 / DSM 8971 / 11B), this protein is Anthranilate phosphoribosyltransferase.